Consider the following 364-residue polypeptide: MAGETTKLDLSVKAVGWGAADASGVLQPIKFYRRVPGERDVKIRVLYSGVCNFDMEMVRNKWGFTRYPYVFGHETAGEVVEVGSKVEKFKVGDKVAVGCMVGSCGQCYNCQSGMENYCPEPNMADGSVYREQGERSYGGCSNVMVVDEKFVLRWPENLPQDKGVALLCAGVVVYSPMKHLGLDKPGKHIGVFGLGGLGSVAVKFIKAFGGKATVISTSRRKEKEAIEEHGADAFVVNTDSEQLKALAGTMDGVVDTTPGGRTPMSLMLNLLKFDGAVMLVGAPESLFELPAAPLIMGRKKIIGSSTGGLKEYQEMLDFAAKHNIVCDTEVIGIDYLSTAMERIKNLDVKYRFAIDIGNTLKFEE.

Residue Cys51 participates in Zn(2+) binding. An NADP(+)-binding site is contributed by Asn52. His73, Glu74, Cys104, Cys107, Cys110, Cys118, and Cys168 together coordinate Zn(2+). NADP(+)-binding residues include Leu194, Gly196, Leu197, Ser216, Thr217, Ser218, Lys221, Arg261, Val280, Ala282, Ser304, Thr306, and Arg351.

It belongs to the zinc-containing alcohol dehydrogenase family. Class-III subfamily. As to quaternary structure, homodimer. The cofactor is Zn(2+). Expressed in leaf epidermis.

It catalyses the reaction (19E)-geissoschizine + NADP(+) = 4,21-dehydrogeissoschizine + NADPH. Its pathway is alkaloid biosynthesis. Functionally, component of the seco-iridoid and derivatives monoterpenoid indole alkaloids (MIAs, e.g. catharanthine, tabersonine, vincadifformine, vindoline, vincristine, quinine and strychnine) biosynthesis pathway. During the conversion of strictosidine aglycone to geissoschizine, catalyzes iminium reduction on 4,21-dehydrogeissoschizine to produce 19E-geissoschizine, precursor of catharanthine and tabersonine derivatives. May also trigger the production of reactive intermediate used by the HL1, HL2, HL3 and HL4 to form catharanthine, vincadifformine and tabersonine. This is Geissoschizine synthase from Catharanthus roseus (Madagascar periwinkle).